We begin with the raw amino-acid sequence, 142 residues long: Large ribosomal subunit protein uL13 (142 aa).

This sequence belongs to the universal ribosomal protein uL13 family. In terms of assembly, part of the 50S ribosomal subunit.

In terms of biological role, this protein is one of the early assembly proteins of the 50S ribosomal subunit, although it is not seen to bind rRNA by itself. It is important during the early stages of 50S assembly. This chain is Large ribosomal subunit protein uL13, found in Acidithiobacillus ferrooxidans (strain ATCC 23270 / DSM 14882 / CIP 104768 / NCIMB 8455) (Ferrobacillus ferrooxidans (strain ATCC 23270)).